The chain runs to 211 residues: Mediator of RNA polymerase II transcription subunit 18 (211 aa).

This sequence belongs to the Mediator complex subunit 18 family. Component of the Mediator complex.

The protein resides in the nucleus. Component of the Mediator complex, a coactivator involved in the regulated transcription of nearly all RNA polymerase II-dependent genes. Mediator functions as a bridge to convey information from gene-specific regulatory proteins to the basal RNA polymerase II transcription machinery. Mediator is recruited to promoters by direct interactions with regulatory proteins and serves as a scaffold for the assembly of a functional preinitiation complex with RNA polymerase II and the general transcription factors. This is Mediator of RNA polymerase II transcription subunit 18 (MED18) from Anopheles gambiae (African malaria mosquito).